We begin with the raw amino-acid sequence, 351 residues long: uncharacterized protein (351 aa).

Residues D215, D226, H290, E319, and E333 each contribute to the Mn(2+) site.

It belongs to the peptidase M24B family. Requires Mn(2+) as cofactor.

This is an uncharacterized protein from Staphylococcus haemolyticus (strain JCSC1435).